Reading from the N-terminus, the 353-residue chain is Mitogen-activated protein kinase FUS3 (353 aa).

Residues 13–309 (FQLKSLLGEG…AKEALEHPYL (297 aa)) enclose the Protein kinase domain. ATP-binding positions include 19 to 27 (LGEGAYGVV) and lysine 42. The Proton acceptor role is filled by aspartate 137. Threonine 180 carries the phosphothreonine modification. A TXY motif is present at residues 180 to 182 (TEY). Tyrosine 182 bears the Phosphotyrosine mark. Residue lysine 345 forms a Glycyl lysine isopeptide (Lys-Gly) (interchain with G-Cter in ubiquitin) linkage.

The protein belongs to the protein kinase superfamily. CMGC Ser/Thr protein kinase family. MAP kinase subfamily. In terms of assembly, in the nucleus, FUS3 forms a complex with DIG1, DIG2 and STE12. The interaction of FUS3 with STE12 depends on the presence of both DIG1 and DIG2. STE12 is lost from FUS3/DIG1/DIG2 complex after pheromone treatment. During its activation and phosphorylation, FUS3 forms a membrane-associated complex with the scaffold protein STE5, the MAPKK STE7, the MAPKKK STE11, and the G-protein beta subunit GBB/STE4; interacting directly with STE7 and STE5. Requires Mg(2+) as cofactor. Dually phosphorylated on Thr-180 and Tyr-182 by STE7 in response to pheromone induction, which activates the enzyme. Activated FUS3 initiates a feedback signal, down-regulating phosphorylation of both, FUS3 and KSS1.

Its subcellular location is the nucleus. The protein resides in the cytoplasm. It localises to the periplasm. The catalysed reaction is L-seryl-[protein] + ATP = O-phospho-L-seryl-[protein] + ADP + H(+). It catalyses the reaction L-threonyl-[protein] + ATP = O-phospho-L-threonyl-[protein] + ADP + H(+). Its activity is regulated as follows. Activated by tyrosine and threonine phosphorylation after pheromone treatment. Together with closely related KSS1, FUS3 is the final kinase in the signal transduction cascade regulating activation/repression of the mating and filamentation pathways, induced by pheromone and nitrogen/carbon limitation, respectively. Phosphorylated FUS3 activates the mating but suppresses the filamentation pathway, whereas activated KSS1 activates both pathways. Pheromone-activated FUS3 functions by inhibiting the binding of the transcriptional activator STE12 to filamentation specific genes while inducing its binding to and activity at mating specific genes. Non-activated FUS3 has a repressive effect on STE12 transcriptional activity. KSS1 can partially compensate for the lack of FUS3 but mating efficiency is reduced and the filamentation program is partially activated upon pheromone signaling. FUS3 phosphorylates STE7, STE5, FAR1, DIG1, DIG2 and STE12. This chain is Mitogen-activated protein kinase FUS3 (FUS3), found in Saccharomyces cerevisiae (strain ATCC 204508 / S288c) (Baker's yeast).